The following is a 310-amino-acid chain: Probable GTP 3',8-cyclase (310 aa).

Positions 5-218 constitute a Radical SAM core domain; the sequence is KYGRSLQKLR…VNIIFELGGR (214 aa). Arg14 is a binding site for GTP. [4Fe-4S] cluster is bound by residues Cys21, Cys25, and Cys28. A GTP-binding site is contributed by Lys62. Position 66 (Gly66) interacts with S-adenosyl-L-methionine. Residue Thr91 participates in GTP binding. Residue Ser115 participates in S-adenosyl-L-methionine binding. GTP is bound at residue Lys153. Positions 251, 254, and 268 each coordinate [4Fe-4S] cluster.

It belongs to the radical SAM superfamily. MoaA family. It depends on [4Fe-4S] cluster as a cofactor.

It carries out the reaction GTP + AH2 + S-adenosyl-L-methionine = (8S)-3',8-cyclo-7,8-dihydroguanosine 5'-triphosphate + 5'-deoxyadenosine + L-methionine + A + H(+). It participates in cofactor biosynthesis; molybdopterin biosynthesis. In terms of biological role, catalyzes the cyclization of GTP to (8S)-3',8-cyclo-7,8-dihydroguanosine 5'-triphosphate. This chain is Probable GTP 3',8-cyclase, found in Pyrobaculum aerophilum (strain ATCC 51768 / DSM 7523 / JCM 9630 / CIP 104966 / NBRC 100827 / IM2).